The chain runs to 274 residues: tRNA-cytidine(32) 2-sulfurtransferase (274 aa).

Positions 40-45 (SGGKDS) match the PP-loop motif motif. [4Fe-4S] cluster-binding residues include Cys115, Cys118, and Cys206.

This sequence belongs to the TtcA family. As to quaternary structure, homodimer. It depends on Mg(2+) as a cofactor. [4Fe-4S] cluster is required as a cofactor.

It is found in the cytoplasm. It carries out the reaction cytidine(32) in tRNA + S-sulfanyl-L-cysteinyl-[cysteine desulfurase] + AH2 + ATP = 2-thiocytidine(32) in tRNA + L-cysteinyl-[cysteine desulfurase] + A + AMP + diphosphate + H(+). It functions in the pathway tRNA modification. Catalyzes the ATP-dependent 2-thiolation of cytidine in position 32 of tRNA, to form 2-thiocytidine (s(2)C32). The sulfur atoms are provided by the cysteine/cysteine desulfurase (IscS) system. The chain is tRNA-cytidine(32) 2-sulfurtransferase from Pseudomonas aeruginosa (strain LESB58).